A 725-amino-acid polypeptide reads, in one-letter code: Methionine--tRNA ligase (725 aa).

Residues 27–37 carry the 'HIGH' region motif; it reads PYANGQIHIGH. Cys158, Cys161, Cys171, and Cys174 together coordinate Zn(2+). A 'KMSKS' region motif is present at residues 348–352; the sequence is KMSKS. Lys351 contributes to the ATP binding site. In terms of domain architecture, tRNA-binding spans 619-725; that stretch reads DFAKIDLRIA…SGAKPGMRVK (107 aa).

It belongs to the class-I aminoacyl-tRNA synthetase family. MetG type 1 subfamily. In terms of assembly, homodimer. Requires Zn(2+) as cofactor.

It localises to the cytoplasm. The catalysed reaction is tRNA(Met) + L-methionine + ATP = L-methionyl-tRNA(Met) + AMP + diphosphate. In terms of biological role, is required not only for elongation of protein synthesis but also for the initiation of all mRNA translation through initiator tRNA(fMet) aminoacylation. The polypeptide is Methionine--tRNA ligase (Burkholderia pseudomallei (strain 1106a)).